The sequence spans 120 residues: Large ribosomal subunit protein uL18 (120 aa).

It belongs to the universal ribosomal protein uL18 family. As to quaternary structure, part of the 50S ribosomal subunit; part of the 5S rRNA/L5/L18/L25 subcomplex. Contacts the 5S and 23S rRNAs.

This is one of the proteins that bind and probably mediate the attachment of the 5S RNA into the large ribosomal subunit, where it forms part of the central protuberance. The chain is Large ribosomal subunit protein uL18 from Bradyrhizobium sp. (strain BTAi1 / ATCC BAA-1182).